A 116-amino-acid chain; its full sequence is Non-specific lipid-transfer protein (116 aa).

Positions methionine 1–glycine 22 are cleaved as a signal peptide. Intrachain disulfides connect cysteine 36/cysteine 52, cysteine 53/cysteine 98, and cysteine 73/cysteine 112.

This sequence belongs to the plant LTP family.

In terms of biological role, plant non-specific lipid-transfer proteins transfer phospholipids as well as galactolipids across membranes. May play a role in wax or cutin deposition in the cell walls of expanding epidermal cells and certain secretory tissues. The protein is Non-specific lipid-transfer protein of Gossypium hirsutum (Upland cotton).